The chain runs to 494 residues: Aspartyl/glutamyl-tRNA(Asn/Gln) amidotransferase subunit B (494 aa).

It belongs to the GatB/GatE family. GatB subfamily. In terms of assembly, heterotrimer of A, B and C subunits.

It carries out the reaction L-glutamyl-tRNA(Gln) + L-glutamine + ATP + H2O = L-glutaminyl-tRNA(Gln) + L-glutamate + ADP + phosphate + H(+). The enzyme catalyses L-aspartyl-tRNA(Asn) + L-glutamine + ATP + H2O = L-asparaginyl-tRNA(Asn) + L-glutamate + ADP + phosphate + 2 H(+). Functionally, allows the formation of correctly charged Asn-tRNA(Asn) or Gln-tRNA(Gln) through the transamidation of misacylated Asp-tRNA(Asn) or Glu-tRNA(Gln) in organisms which lack either or both of asparaginyl-tRNA or glutaminyl-tRNA synthetases. The reaction takes place in the presence of glutamine and ATP through an activated phospho-Asp-tRNA(Asn) or phospho-Glu-tRNA(Gln). The polypeptide is Aspartyl/glutamyl-tRNA(Asn/Gln) amidotransferase subunit B (Synechococcus sp. (strain WH7803)).